The sequence spans 177 residues: MLLMPNKDWHWEYNETCKQLSISLGSEMEFLTPYKTKLLIPDALTATEFNLEHAKFYIKMLETLPKVLHISDAGIVQTALNATAAHFLLQSQMPKSWFFDVSDECVYCEVGKLFQLNCGYSKVLALVVDNGLQAATVMILSQYCQLSDSKSLVQFDTIKVMHNRLHPLRKARQVVAA.

Belongs to the ZapC family. As to quaternary structure, interacts directly with FtsZ.

The protein resides in the cytoplasm. In terms of biological role, contributes to the efficiency of the cell division process by stabilizing the polymeric form of the cell division protein FtsZ. Acts by promoting interactions between FtsZ protofilaments and suppressing the GTPase activity of FtsZ. The protein is Cell division protein ZapC of Shewanella frigidimarina (strain NCIMB 400).